Consider the following 292-residue polypeptide: Arabinose operon regulatory protein (292 aa).

Pro8, Thr24, Arg38, Tyr82, and His93 together coordinate alpha-L-arabinopyanose. The region spanning Arg180–Gly279 is the HTH araC/xylS-type domain. 2 DNA-binding regions (H-T-H motif) span residues Ala198 to Leu219 and Ile246 to Thr269.

As to quaternary structure, homodimer.

The protein resides in the cytoplasm. With respect to regulation, arabinose converts the repressor form of AraC to the activator form to regulate the araBAD promoter. In the absence of arabinose, AraC binds to the araO2 and araI1 half-sites in the promoter region of the araBAD operon, leading to the formation of a DNA loop that blocks access of RNA polymerase to the promoter. In the presence of arabinose and the cyclic AMP receptor protein (CRP), it binds to the adjacent half-sites araI1 and araI2, leading to the binding of RNA polymerase to the promoter region and transcription of the araBAD operon. AraI1 acts as a switch mechanism allowing both the repressor and the activator forms of AraC protein to regulate the araBAD promoter. Inhibited by D-fucose, which binds competitively to the same site on the protein. Its function is as follows. Transcription factor that regulates the expression of several genes involved in the transport and metabolism of L-arabinose. Functions both as a positive and a negative regulator. In the presence of arabinose, activates the expression of the araBAD, araE, araFGH and araJ promoters. In the absence of arabinose, negatively regulates the araBAD operon. Represses its own transcription. Acts by binding directly to DNA. The chain is Arabinose operon regulatory protein from Escherichia coli (strain K12).